The chain runs to 825 residues: Endochitinase A1 (825 aa).

Residues 1 to 22 form the signal peptide; that stretch reads MVSSKLSFVATAVAALAPLASA. The GH18 domain occupies 29–338; that stretch reads SNLAIYWGQG…DHMKDILLHC (310 aa). Glu-174 serves as the catalytic Proton donor. 3 disordered regions span residues 338–568, 680–736, and 750–792; these read CDPS…TTTA, PVTE…VSTS, and PLIL…YTQE. The segment covering 344–554 has biased composition (low complexity); the sequence is VTSSSAVPSS…STDESSTTVG (211 aa). Asn-559 carries N-linked (GlcNAc...) asparagine glycosylation. Polar residues predominate over residues 701–712; sequence EGSNPTQPSGAS. Residue Asn-717 is glycosylated (N-linked (GlcNAc...) asparagine). Positions 772-792 are enriched in polar residues; it reads PSGQNSGSSSHVPIPPSYTQE. Residue Gly-800 is the site of GPI-anchor amidated glycine attachment. The propeptide at 801–825 is removed in mature form; the sequence is AASRVTGLGHGLVLTVLTLSAFFVL.

This sequence belongs to the glycosyl hydrolase 18 family. Chitinase class III subfamily. In terms of processing, O-mannosylated by pmt4.

The protein resides in the cell membrane. Its subcellular location is the secreted. It is found in the cell wall. The catalysed reaction is Random endo-hydrolysis of N-acetyl-beta-D-glucosaminide (1-&gt;4)-beta-linkages in chitin and chitodextrins.. Its activity is regulated as follows. The cyclic peptide natural product argifin acts as a specific inhibitor. GPI-anchored chitinase involved in the degradation of chitin, a component of the cell walls of fungi and exoskeletal elements of some animals (including worms and arthropods). Required to reshape the cell wall at the sites where cell wall remodeling and/or cell wall maturation actively take place such as sites of conidia formation. The protein is Endochitinase A1 (chiA1) of Aspergillus fumigatus (Neosartorya fumigata).